A 417-amino-acid chain; its full sequence is NADH-quinone oxidoreductase subunit D (417 aa).

Belongs to the complex I 49 kDa subunit family. In terms of assembly, NDH-1 is composed of 14 different subunits. Subunits NuoB, C, D, E, F, and G constitute the peripheral sector of the complex.

It localises to the cell inner membrane. It carries out the reaction a quinone + NADH + 5 H(+)(in) = a quinol + NAD(+) + 4 H(+)(out). NDH-1 shuttles electrons from NADH, via FMN and iron-sulfur (Fe-S) centers, to quinones in the respiratory chain. The immediate electron acceptor for the enzyme in this species is believed to be ubiquinone. Couples the redox reaction to proton translocation (for every two electrons transferred, four hydrogen ions are translocated across the cytoplasmic membrane), and thus conserves the redox energy in a proton gradient. The polypeptide is NADH-quinone oxidoreductase subunit D (Cupriavidus necator (strain ATCC 17699 / DSM 428 / KCTC 22496 / NCIMB 10442 / H16 / Stanier 337) (Ralstonia eutropha)).